Consider the following 82-residue polypeptide: UPF0337 protein PP_2059 (82 aa).

This sequence belongs to the UPF0337 (CsbD) family.

In Pseudomonas putida (strain ATCC 47054 / DSM 6125 / CFBP 8728 / NCIMB 11950 / KT2440), this protein is UPF0337 protein PP_2059.